We begin with the raw amino-acid sequence, 570 residues long: Putative ABC transporter ATP-binding protein SACOL2708 (570 aa).

ABC transporter domains are found at residues 6–247 (ISFK…GIRE) and 304–537 (LELN…ASLR). ATP contacts are provided by residues 40–47 (GASGSGKS) and 338–345 (GHNGAGKS).

This sequence belongs to the ABC transporter superfamily.

The protein localises to the cell membrane. In terms of biological role, probably part of an ABC transporter complex. Responsible for energy coupling to the transport system. The chain is Putative ABC transporter ATP-binding protein SACOL2708 from Staphylococcus aureus (strain COL).